The sequence spans 163 residues: Methyl-CpG-binding domain-containing protein 3 (163 aa).

Residues Thr-6–Met-56 form a CW-type zinc finger. The region spanning Trp-65–Arg-137 is the MBD domain. The disordered stretch occupies residues Leu-140 to Ala-163. Over residues Asn-153–Ala-163 the composition is skewed to basic and acidic residues.

It is found in the nucleus. In terms of biological role, probable transcriptional regulator. This is Methyl-CpG-binding domain-containing protein 3 (MBD3) from Arabidopsis thaliana (Mouse-ear cress).